Here is a 602-residue protein sequence, read N- to C-terminus: Translation initiation factor IF-2 (602 aa).

In terms of domain architecture, tr-type G spans 112-281 (KRAPIITIMG…LLLCEVLDLK (170 aa)). Residues 121–128 (GHVDHGKT) form a G1 region. 121–128 (GHVDHGKT) serves as a coordination point for GTP. Residues 146-150 (GITQH) are G2. The interval 167-170 (DTPG) is G3. GTP is bound by residues 167 to 171 (DTPGH) and 221 to 224 (NKMD). Residues 221-224 (NKMD) form a G4 region. Residues 257-259 (SAL) are G5.

It belongs to the TRAFAC class translation factor GTPase superfamily. Classic translation factor GTPase family. IF-2 subfamily.

It is found in the cytoplasm. In terms of biological role, one of the essential components for the initiation of protein synthesis. Protects formylmethionyl-tRNA from spontaneous hydrolysis and promotes its binding to the 30S ribosomal subunits. Also involved in the hydrolysis of GTP during the formation of the 70S ribosomal complex. This chain is Translation initiation factor IF-2, found in Mycoplasmopsis synoviae (strain 53) (Mycoplasma synoviae).